Consider the following 84-residue polypeptide: Large ribosomal subunit protein eL34 (84 aa).

Belongs to the eukaryotic ribosomal protein eL34 family.

This chain is Large ribosomal subunit protein eL34, found in Pyrobaculum calidifontis (strain DSM 21063 / JCM 11548 / VA1).